Reading from the N-terminus, the 80-residue chain is U19-lycotoxin-Ls1a (80 aa).

An N-terminal signal peptide occupies residues 1–22; sequence MSPKVQALIFIVGLITLLAAHA. A propeptide spanning residues 23–34 is cleaved from the precursor; sequence QEELSDNTESER. Cystine bridges form between C36–C50, C43–C55, C49–C66, and C57–C64.

The protein belongs to the neurotoxin 02 (plectoxin) family. 05 (U19-lycotoxin) subfamily. As to expression, expressed by the venom gland.

The protein resides in the secreted. This chain is U19-lycotoxin-Ls1a, found in Lycosa singoriensis (Wolf spider).